Reading from the N-terminus, the 21-residue chain is Chlorophyllase type 2 (21 aa).

This sequence belongs to the AB hydrolase superfamily. Lipase family.

The catalysed reaction is a chlorophyll + H2O = a chlorophyllide + phytol + H(+). It participates in porphyrin-containing compound metabolism; chlorophyll degradation. Catalyzes the hydrolysis of ester bond in chlorophyll to yield chlorophyllide and phytol. This is Chlorophyllase type 2 from Chenopodium album (Fat hen).